Reading from the N-terminus, the 1733-residue chain is DNA-directed RNA polymerase II subunit RPB1 (1733 aa).

Residues C67, C70, C77, H80, C107, C110, C148, and C167 each contribute to the Zn(2+) site. Positions 248 to 260 are lid loop; it reads PSISFNESQRGED. Residues 306-323 are rudder loop; sequence NDIAGQPQALQKSGRPVK. 3 residues coordinate Mg(2+): D481, D483, and D485. K695 participates in a covalent cross-link: Glycyl lysine isopeptide (Lys-Gly) (interchain with G-Cter in ubiquitin). The interval 810 to 822 is bridging helix; sequence PQEFFFHAMGGRE. Glycyl lysine isopeptide (Lys-Gly) (interchain with G-Cter in ubiquitin) cross-links involve residues K1246 and K1350. A Phosphothreonine modification is found at T1471. A disordered region spans residues 1537-1733; sequence VSSPGFSPTS…QKHNENENSR (197 aa). Low complexity predominate over residues 1538–1719; that stretch reads SSPGFSPTSP…YSPGSPAYSP (182 aa). Tandem repeats lie at residues 1549-1555, 1556-1562, 1563-1569, 1570-1576, 1577-1583, 1584-1590, 1591-1597, 1598-1604, 1605-1611, 1612-1618, 1619-1625, 1626-1632, 1633-1639, 1640-1646, 1647-1653, 1654-1660, 1661-1667, 1668-1674, 1675-1681, 1682-1688, 1689-1695, 1696-1702, and 1703-1709. The tract at residues 1549–1716 is C-terminal domain (CTD); 24 X 7 AA approximate tandem repeats of Y-S-P-T-S-P-[A-S-N-G]; sequence YSPTSPAYSP…SPGYSPGSPA (168 aa). The 24; approximate repeat unit spans residues 1710–1716; that stretch reads YSPGSPA. Residues 1720 to 1733 show a composition bias toward basic and acidic residues; that stretch reads KQDEQKHNENENSR.

The protein belongs to the RNA polymerase beta' chain family. In terms of assembly, component of the RNA polymerase II (Pol II) complex consisting of 12 subunits. Interacts with DEF1; the interaction is direct and serves to bridge RPB1 to the Elongin complex in a DNA-damaged dependent manner. Interacts with the Elongin subunit ELA1. Interacts with the Elongin subunit ELC1. Interacts with ASK10. Interacts with ESS1. Interacts with RTT103. Interacts with SHE2. In terms of processing, the tandem 7 residues repeats in the C-terminal domain (CTD) can be highly phosphorylated. The phosphorylation activates Pol II. Phosphorylation occurs mainly at residues 'Ser-2' and 'Ser-5' of the heptapeptide repeat. The phosphorylated form of Pol II appears to carry, on average, one phosphate per repeat. The phosphorylation state is believed to result from the balanced action of site-specific CTD kinases and phosphatases, and a 'CTD code' that specifies the position of Pol II within the transcription cycle has been proposed. Phosphorylation at 'Ser-5' occurs in promoter-proximal regions in early elongation. Phosphorylation at 'Ser-2' predominates in regions more distal to the promoter and triggers binding of the 3' RNA processing machinery. CTD kinases include KIN28 (as part of the TFKII complex, a subcomplex of the TFIIH holo complex), SSN3/SRB10 (as part of the SRB8-11 complex, a module of the Mediator complex), CTK1 (as part of CTD kinase), and probably BUR1 (as part of the BUR1-BUR2 kinase complex). Phosphatases include FCP1 and SSU72. Post-translationally, following transcription stress, the elongating form of RNA polymerase II (RNA pol IIo) is polyubiquitinated via 'Lys-63'-linkages on Lys-1246 by the RSP5-UBA1-UBC5 complex at DNA damage sites without leading to degradation: ubiquitination promotes RNA pol IIo backtracking to allow access by the transcription-coupled nucleotide excision repair (TC-NER) machinery. Subsequent DEF1-dependent polyubiquitination by the elongin complex via 'Lys-48'-linkages may lead to proteasome-mediated degradation; presumably at stalled RNA pol II where TC-NER has failed, to halt global transcription and enable 'last resort' DNA repair pathways.

The protein localises to the nucleus. The enzyme catalyses RNA(n) + a ribonucleoside 5'-triphosphate = RNA(n+1) + diphosphate. DNA-dependent RNA polymerase catalyzes the transcription of DNA into RNA using the four ribonucleoside triphosphates as substrates. Largest and catalytic component of RNA polymerase II which synthesizes mRNA precursors and many functional non-coding RNAs. Forms the polymerase active center together with the second largest subunit. Pol II is the central component of the basal RNA polymerase II transcription machinery. During a transcription cycle, Pol II, general transcription factors and the Mediator complex assemble as the preinitiation complex (PIC) at the promoter. 11-15 base pairs of DNA surrounding the transcription start site are melted and the single-stranded DNA template strand of the promoter is positioned deeply within the central active site cleft of Pol II to form the open complex. After synthesis of about 30 bases of RNA, Pol II releases its contacts with the core promoter and the rest of the transcription machinery (promoter clearance) and enters the stage of transcription elongation in which it moves on the template as the transcript elongates. Pol II appears to oscillate between inactive and active conformations at each step of nucleotide addition. Elongation is influenced by the phosphorylation status of the C-terminal domain (CTD) of Pol II largest subunit (RPB1), which serves as a platform for assembly of factors that regulate transcription initiation, elongation, termination and mRNA processing. Pol II is composed of mobile elements that move relative to each other. The core element with the central large cleft comprises RPB3, RBP10, RPB11, RPB12 and regions of RPB1 and RPB2 forming the active center. The clamp element (portions of RPB1, RPB2 and RPB3) is connected to the core through a set of flexible switches and moves to open and close the cleft. A bridging helix emanates from RPB1 and crosses the cleft near the catalytic site and is thought to promote translocation of Pol II by acting as a ratchet that moves the RNA-DNA hybrid through the active site by switching from straight to bent conformations at each step of nucleotide addition. In elongating Pol II, the lid loop (RPB1) appears to act as a wedge to drive apart the DNA and RNA strands at the upstream end of the transcription bubble and guide the RNA strand toward the RNA exit groove located near the base of the largely unstructured CTD domain of RPB1. The rudder loop (RPB1) interacts with single-stranded DNA after separation from the RNA strand, likely preventing reassociation with the exiting RNA. The cleft is surrounded by jaws: an upper jaw formed by portions of RBP1, RPB2 and RPB9, and a lower jaw, formed by RPB5 and portions of RBP1. The jaws are thought to grab the incoming DNA template, mainly by RPB5 direct contacts to DNA. This Saccharomyces cerevisiae (strain ATCC 204508 / S288c) (Baker's yeast) protein is DNA-directed RNA polymerase II subunit RPB1 (RPO21).